Consider the following 28-residue polypeptide: Caerulein precursor fragment B1 (28 aa).

It belongs to the gastrin/cholecystokinin family. In terms of tissue distribution, expressed by the skin glands.

Its subcellular location is the secreted. Its function is as follows. Peptide CPF-B1: Has antimicrobial activity against Gram-negative bacteria E.coli ATCC 25922 (MIC=5 uM) and multidrug-resistant A.baumannii (MIC=4-8 uM), against Gram-positive bacteria S.aureus ATCC 25923 (MIC=5 uM) and methicillin-resistant S.aureus and against fungus C.albicans ATCC 90028 (MIC=25 uM). Has some hemolytic activity against human erythrocytes at high concentrations. The polypeptide is Caerulein precursor fragment B1 (Xenopus borealis (Kenyan clawed frog)).